Consider the following 514-residue polypeptide: Cilia- and flagella-associated protein 53 (514 aa).

A coiled-coil region spans residues 207–429; the sequence is EDRLAKERRE…ERINEGLKEL (223 aa).

This sequence belongs to the CFAP53 family. As to quaternary structure, microtubule inner protein component of sperm flagellar doublet microtubules. Interacts with PIERCE1 and PIERCE2; the interactions link outer dynein arms docking complex (ODA-DC) to the internal microtubule inner proteins (MIP) in cilium axoneme. Interacts with CCDC38. Interacts with CCDC42 and IFT88. Interacts with centriolar satellite proteins PIBF1/CEP90 and PCM1. Interacts with dyneins DNAIC1, DNAIC2 AND DNAH11 and with ODA-DC component ODAD4/TTC25. Expressed in trachea multiciliated cells.

The protein resides in the cytoplasm. It is found in the cytoskeleton. Its subcellular location is the cilium axoneme. It localises to the flagellum axoneme. The protein localises to the microtubule organizing center. The protein resides in the centrosome. It is found in the centriolar satellite. Its subcellular location is the spindle pole. In terms of biological role, microtubule inner protein (MIP) part of the dynein-decorated doublet microtubules (DMTs) in cilia axoneme, which is required for motile cilia beating. Regulates motility patterns of both 9+0 and 9+2 motile cilia through differential localization and recruitment of axonemal dynein components. Required for centriolar satellite integrity and non-motile cilium assembly. Required for motile cilium formation. Through its role in beating of primary cilia, involved in the establishment of organ laterality during embryogenesis. Required for sperm flagellum biogenesis and is essential for male fertility. The protein is Cilia- and flagella-associated protein 53 (CFAP53) of Bos taurus (Bovine).